Consider the following 377-residue polypeptide: Probable transposase for insertion sequence element IS5377 (377 aa).

Belongs to the transposase 11 family.

This Geobacillus stearothermophilus (Bacillus stearothermophilus) protein is Probable transposase for insertion sequence element IS5377.